The sequence spans 539 residues: Laccase-1 (539 aa).

An N-terminal signal peptide occupies residues 1 to 21 (MAFTAISLFLAALGVINTAFA). Plastocyanin-like domains follow at residues 37-154 (AEVN…YDPE) and 166-309 (ESTV…HYLG). N-linked (GlcNAc...) asparagine glycosylation occurs at Asn78. Positions 88 and 90 each coordinate Cu cation. 2 disulfides stabilise this stretch: Cys109–Cys513 and Cys141–Cys228. Asn120 carries an N-linked (GlcNAc...) asparagine glycan. Cu cation contacts are provided by His133 and His135. N-linked (GlcNAc...) asparagine glycans are attached at residues Asn202, Asn233, Asn240, Asn293, Asn318, Asn353, Asn385, and Asn405. The Plastocyanin-like 3 domain occupies 374–495 (SPTVPVLLQI…GFAVVMAEDP (122 aa)). Cu cation contacts are provided by His421, His424, and His426. N-linked (GlcNAc...) asparagine glycosylation is present at Asn457. Residues His476, Cys477, His478, and His482 each coordinate Cu cation. Residue Asn532 is glycosylated (N-linked (GlcNAc...) asparagine).

The protein belongs to the multicopper oxidase family. Cu cation is required as a cofactor.

The protein localises to the secreted. It catalyses the reaction 4 hydroquinone + O2 = 4 benzosemiquinone + 2 H2O. Inhibited by chloride ions. Inhibited by citrate. Inhibited by oxalate. Activated by acetate. Functionally, in vitro, has activity towards 2,2'-azino-bis(3-ethylbenzthiazoline-6-sulfonic acid) (ABTS), 2,6-dimethoxy-phenol, and guaiacol. Although brown rot fungi preferentially degrade hemicellulose and cellulose, the enzyme may contribute to generating small amounts of lignin breakdown products required for catalytic reactions. In Fomitopsis schrenkii (Brown rot fungus), this protein is Laccase-1.